Here is a 141-residue protein sequence, read N- to C-terminus: Ribonuclease P protein component (141 aa).

Disordered regions lie at residues R37–T56 and R114–K141. The span at R114–S124 shows a compositional bias: basic and acidic residues.

Belongs to the RnpA family. Consists of a catalytic RNA component (M1 or rnpB) and a protein subunit.

The enzyme catalyses Endonucleolytic cleavage of RNA, removing 5'-extranucleotides from tRNA precursor.. In terms of biological role, RNaseP catalyzes the removal of the 5'-leader sequence from pre-tRNA to produce the mature 5'-terminus. It can also cleave other RNA substrates such as 4.5S RNA. The protein component plays an auxiliary but essential role in vivo by binding to the 5'-leader sequence and broadening the substrate specificity of the ribozyme. The protein is Ribonuclease P protein component of Brucella melitensis biotype 2 (strain ATCC 23457).